Reading from the N-terminus, the 238-residue chain is Putative tyrosine-protein phosphatase OCA1 (238 aa).

The tract at residues 1–43 is disordered; sequence MTSKVGEYEDVPEDESRLTEENVSVPEEEVEDEDEEEDDDDDH. Threonine 2 is modified (N-acetylthreonine). Serine 24 carries the post-translational modification Phosphoserine. Positions 26-42 are enriched in acidic residues; it reads PEEEVEDEDEEEDDDDD. The region spanning 72-230 is the Tyrosine-protein phosphatase domain; sequence NFCPVERYLY…LVKIDKNKAP (159 aa). Cysteine 168 functions as the Phosphocysteine intermediate in the catalytic mechanism.

Belongs to the protein-tyrosine phosphatase family.

The protein localises to the cytoplasm. The enzyme catalyses O-phospho-L-tyrosyl-[protein] + H2O = L-tyrosyl-[protein] + phosphate. Its function is as follows. Putative tyrosine-protein phosphatase required for protection against superoxide stress. Involved in cell-cycle delay in response to linoleic acid hydroperoxide (LoaOOH). This is Putative tyrosine-protein phosphatase OCA1 (OCA1) from Saccharomyces cerevisiae (strain YJM789) (Baker's yeast).